A 474-amino-acid polypeptide reads, in one-letter code: SHC-transforming protein 3 (474 aa).

A disordered region spans residues Met-1–Gln-27. The PID domain maps to Leu-29–Gly-214. Positions Asp-215 to Pro-378 are CH1. Ser-282 carries the post-translational modification Phosphoserine. Residues Gln-308–Lys-328 form a disordered region. The 92-residue stretch at Trp-379–Val-470 folds into the SH2 domain.

In terms of assembly, interacts with the Trk receptors in a phosphotyrosine-dependent manner. Once activated, binds to GRB2. Interacts with activated EGF receptors. Post-translationally, tyrosine phosphorylated. Predominantly expressed in the adult brain.

Signaling adapter that couples activated growth factor receptors to signaling pathway in neurons. Involved in the signal transduction pathways of neurotrophin-activated Trk receptors in cortical neurons. The polypeptide is SHC-transforming protein 3 (Shc3) (Mus musculus (Mouse)).